Here is a 475-residue protein sequence, read N- to C-terminus: Protein nucleotidyltransferase YdiU (475 aa).

8 residues coordinate ATP: glycine 82, glycine 84, arginine 85, lysine 105, aspartate 117, glycine 118, arginine 168, and arginine 175. Aspartate 240 acts as the Proton acceptor in catalysis. 2 residues coordinate Mg(2+): asparagine 241 and aspartate 250. Aspartate 250 is an ATP binding site.

This sequence belongs to the SELO family. Mg(2+) is required as a cofactor. The cofactor is Mn(2+).

The catalysed reaction is L-seryl-[protein] + ATP = 3-O-(5'-adenylyl)-L-seryl-[protein] + diphosphate. It catalyses the reaction L-threonyl-[protein] + ATP = 3-O-(5'-adenylyl)-L-threonyl-[protein] + diphosphate. The enzyme catalyses L-tyrosyl-[protein] + ATP = O-(5'-adenylyl)-L-tyrosyl-[protein] + diphosphate. It carries out the reaction L-histidyl-[protein] + UTP = N(tele)-(5'-uridylyl)-L-histidyl-[protein] + diphosphate. The catalysed reaction is L-seryl-[protein] + UTP = O-(5'-uridylyl)-L-seryl-[protein] + diphosphate. It catalyses the reaction L-tyrosyl-[protein] + UTP = O-(5'-uridylyl)-L-tyrosyl-[protein] + diphosphate. In terms of biological role, nucleotidyltransferase involved in the post-translational modification of proteins. It can catalyze the addition of adenosine monophosphate (AMP) or uridine monophosphate (UMP) to a protein, resulting in modifications known as AMPylation and UMPylation. This is Protein nucleotidyltransferase YdiU from Aeromonas hydrophila subsp. hydrophila (strain ATCC 7966 / DSM 30187 / BCRC 13018 / CCUG 14551 / JCM 1027 / KCTC 2358 / NCIMB 9240 / NCTC 8049).